The following is a 577-amino-acid chain: Arginine--tRNA ligase (577 aa).

The 'HIGH' region signature appears at proline 122–histidine 132.

Belongs to the class-I aminoacyl-tRNA synthetase family. Monomer.

Its subcellular location is the cytoplasm. It carries out the reaction tRNA(Arg) + L-arginine + ATP = L-arginyl-tRNA(Arg) + AMP + diphosphate. The protein is Arginine--tRNA ligase of Escherichia coli O7:K1 (strain IAI39 / ExPEC).